Reading from the N-terminus, the 304-residue chain is Glycine--tRNA ligase alpha subunit (304 aa).

It belongs to the class-II aminoacyl-tRNA synthetase family. Tetramer of two alpha and two beta subunits.

The protein resides in the cytoplasm. It catalyses the reaction tRNA(Gly) + glycine + ATP = glycyl-tRNA(Gly) + AMP + diphosphate. In Tolumonas auensis (strain DSM 9187 / NBRC 110442 / TA 4), this protein is Glycine--tRNA ligase alpha subunit.